Reading from the N-terminus, the 315-residue chain is HTH-type transcriptional regulator TreR (315 aa).

The 55-residue stretch at 5 to 59 (LTIKDIARLSGVGKSTVSRVLNNESGVSERTRERVEAVMNQHGFSPSRSARAMRG) folds into the HTH lacI-type domain. Residues 7–26 (IKDIARLSGVGKSTVSRVLN) constitute a DNA-binding region (H-T-H motif). Alpha,alpha-trehalose 6-phosphate contacts are provided by residues 71 to 77 (RLDSLSE), glycine 126, arginine 147, 187 to 190 (DITT), arginine 194, threonine 242, and tyrosine 284.

In terms of assembly, homodimer.

Repressor of the treBC operon. It is able to bind trehalose-6-phosphate. This is HTH-type transcriptional regulator TreR (treR) from Salmonella typhimurium (strain LT2 / SGSC1412 / ATCC 700720).